The sequence spans 208 residues: Proheparin-binding EGF-like growth factor (208 aa).

The N-terminal stretch at 1–23 is a signal peptide; sequence MKLLPSVVLKLFLAAVFSALVTG. Residues 24–62 constitute a propeptide that is removed on maturation; that stretch reads ESLERLRRGLADGTSNLVSPTESTDQLLPPGGGRGREVL. Residues 24-161 are Extracellular-facing; it reads ESLERLRRGL…NRLYTYDHTT (138 aa). Polar residues predominate over residues 37 to 49; sequence TSNLVSPTESTDQ. Disordered regions lie at residues 37 to 57 and 81 to 104; these read TSNL…GGGR and QALA…LGKK. O-linked (GalNAc...) threonine glycosylation occurs at Thr-85. Basic residues predominate over residues 93–102; it reads KRKKKGKGLG. Positions 104-144 constitute an EGF-like domain; sequence KRDPCLRKYKDFCIHGECKYVKELRAPSCICHPGYHGERCH. Disulfide bonds link Cys-108–Cys-121, Cys-116–Cys-132, and Cys-134–Cys-143. Positions 149 to 208 are cleaved as a propeptide — C-terminal; it reads PVKNRLYTYDHTTILAVVAVVLSSVCLLVIVGLLMFRYHRRGGYDVENEEKVKLGVTASH. Residues 162–182 form a helical membrane-spanning segment; sequence ILAVVAVVLSSVCLLVIVGLL. Residues 183 to 208 are Cytoplasmic-facing; sequence MFRYHRRGGYDVENEEKVKLGVTASH.

As to quaternary structure, interacts with FBLN1. Interacts with EGFR and ERBB4. Post-translationally, O-glycosylated. As to expression, macrophages, midbrain, cerebellum, hypothalamus, cerebral cortex, bulbourethral gland, lung, heart ventricle, kidney, skin, prostate, seminal vesicle, testis; at low levels in lymph node, thymus, spleen; not detected in pituitary, olfactory bulb, thyroid, duodenum, pancreas, liver, submaxillary gland.

The protein localises to the secreted. It is found in the extracellular space. It localises to the cell membrane. Functionally, growth factor that mediates its effects via EGFR, ERBB2 and ERBB4. Required for normal cardiac valve formation and normal heart function. Promotes smooth muscle cell proliferation. May be involved in macrophage-mediated cellular proliferation. It is mitogenic for fibroblasts, but not endothelial cells. It is able to bind EGF receptor/EGFR with higher affinity than EGF itself and is a far more potent mitogen for smooth muscle cells than EGF. Also acts as a diphtheria toxin receptor. The chain is Proheparin-binding EGF-like growth factor (HBEGF) from Sus scrofa (Pig).